The sequence spans 967 residues: Translation initiation factor IF-2 (967 aa).

Disordered regions lie at residues 201–320 (KPIV…PGFV) and 349–382 (LQGK…ELEA). A compositionally biased stretch (polar residues) spans 233–248 (TGPTFSGQTIDLSQFN). Over residues 256–272 (PNKGGAKPAGAGNNNNN) the composition is skewed to low complexity. Over residues 354–363 (NKSKAAKYRR) the composition is skewed to basic residues. Residues 364-382 (DKRDTHRQKSDDEQRELEA) show a composition bias toward basic and acidic residues. Residues 465–635 (HRAPIVTVMG…LLEAEVLDLK (171 aa)) form the tr-type G domain. Positions 474–481 (GHVDHGKT) are G1. 474–481 (GHVDHGKT) serves as a coordination point for GTP. A G2 region spans residues 499 to 503 (GITQH). Residues 521–524 (DTPG) are G3. GTP contacts are provided by residues 521-525 (DTPGH) and 575-578 (NKVD). Positions 575–578 (NKVD) are G4. Residues 611 to 613 (SAK) are G5.

The protein belongs to the TRAFAC class translation factor GTPase superfamily. Classic translation factor GTPase family. IF-2 subfamily.

It is found in the cytoplasm. Functionally, one of the essential components for the initiation of protein synthesis. Protects formylmethionyl-tRNA from spontaneous hydrolysis and promotes its binding to the 30S ribosomal subunits. Also involved in the hydrolysis of GTP during the formation of the 70S ribosomal complex. This Flavobacterium psychrophilum (strain ATCC 49511 / DSM 21280 / CIP 103535 / JIP02/86) protein is Translation initiation factor IF-2.